The chain runs to 591 residues: Aspartate--tRNA(Asp/Asn) ligase (591 aa).

E176 is an L-aspartate binding site. An aspartate region spans residues 200–203 (QLFK). L-aspartate is bound at residue R222. ATP contacts are provided by residues 222 to 224 (RDE) and Q231. L-aspartate is bound at residue H450. E484 lines the ATP pocket. R491 serves as a coordination point for L-aspartate. ATP is bound at residue 536-539 (GLDR).

The protein belongs to the class-II aminoacyl-tRNA synthetase family. Type 1 subfamily. As to quaternary structure, homodimer.

It localises to the cytoplasm. The catalysed reaction is tRNA(Asx) + L-aspartate + ATP = L-aspartyl-tRNA(Asx) + AMP + diphosphate. Aspartyl-tRNA synthetase with relaxed tRNA specificity since it is able to aspartylate not only its cognate tRNA(Asp) but also tRNA(Asn). Reaction proceeds in two steps: L-aspartate is first activated by ATP to form Asp-AMP and then transferred to the acceptor end of tRNA(Asp/Asn). The chain is Aspartate--tRNA(Asp/Asn) ligase from Bacillus cereus (strain B4264).